The primary structure comprises 829 residues: Cation/H(+) antiporter 14 (829 aa).

The next 12 helical transmembrane spans lie at 48–68, 77–97, 117–137, 145–165, 180–200, 215–235, 240–260, 281–301, 329–349, 361–383, 392–412, and 425–445; these read YAMP…RLLY, GMIS…FGQS, SNLG…ASII, ILIG…TVLF, ISTV…TVLA, NCSI…RMFL, LASV…FFVC, IPFF…EVLG, LEMF…GLQT, IIEA…ASAY, FSLA…CVMW, and LLII…VCLY. Ser-827 carries the post-translational modification Phosphoserine.

Belongs to the monovalent cation:proton antiporter 2 (CPA2) transporter (TC 2.A.37) family. CHX (TC 2.A.37.4) subfamily. Preferentially expressed in pollen but also detected in vegetative tissues like leaf trichomes and root vascular tissues.

The protein localises to the membrane. May operate as a cation/H(+) antiporter. This is Cation/H(+) antiporter 14 (CHX14) from Arabidopsis thaliana (Mouse-ear cress).